The primary structure comprises 348 residues: Uroporphyrinogen decarboxylase (348 aa).

Residues 27 to 31 (RQAGR), Phe46, Asp76, Tyr152, Ser207, and His320 each bind substrate.

It belongs to the uroporphyrinogen decarboxylase family. Homodimer.

The protein localises to the cytoplasm. The catalysed reaction is uroporphyrinogen III + 4 H(+) = coproporphyrinogen III + 4 CO2. Its pathway is porphyrin-containing compound metabolism; protoporphyrin-IX biosynthesis; coproporphyrinogen-III from 5-aminolevulinate: step 4/4. Functionally, catalyzes the decarboxylation of four acetate groups of uroporphyrinogen-III to yield coproporphyrinogen-III. This is Uroporphyrinogen decarboxylase from Bacillus cereus (strain AH820).